Consider the following 38-residue polypeptide: Phospholipase A2 2 (38 aa).

Ca(2+) contacts are provided by Tyr28, Gly30, and Gly32.

This sequence belongs to the phospholipase A2 family. Group I subfamily. Ca(2+) serves as cofactor. Expressed by the venom gland.

Its subcellular location is the secreted. The enzyme catalyses a 1,2-diacyl-sn-glycero-3-phosphocholine + H2O = a 1-acyl-sn-glycero-3-phosphocholine + a fatty acid + H(+). Snake venom phospholipase A2 (PLA2) that inhibits neuromuscular transmission by blocking acetylcholine release from the nerve termini. PLA2 catalyzes the calcium-dependent hydrolysis of the 2-acyl groups in 3-sn-phosphoglycerides. This is Phospholipase A2 2 from Calliophis bivirgatus (Blue Malaysian coral snake).